Reading from the N-terminus, the 432-residue chain is Adenylosuccinate synthetase (432 aa).

Residues 13–19 (GDEGKGK) and 41–43 (GHT) each bind GTP. Asp14 (proton acceptor) is an active-site residue. Mg(2+)-binding residues include Asp14 and Gly41. IMP is bound by residues 14-17 (DEGK), 39-42 (NAGH), Thr130, Arg144, Gln225, Thr240, and Arg304. His42 functions as the Proton donor in the catalytic mechanism. 300–306 (ATTGRSR) provides a ligand contact to substrate. GTP-binding positions include Arg306, 332–334 (KLD), and 415–417 (STG).

Belongs to the adenylosuccinate synthetase family. As to quaternary structure, homodimer. The cofactor is Mg(2+).

It is found in the cytoplasm. The enzyme catalyses IMP + L-aspartate + GTP = N(6)-(1,2-dicarboxyethyl)-AMP + GDP + phosphate + 2 H(+). The protein operates within purine metabolism; AMP biosynthesis via de novo pathway; AMP from IMP: step 1/2. Plays an important role in the de novo pathway of purine nucleotide biosynthesis. Catalyzes the first committed step in the biosynthesis of AMP from IMP. This chain is Adenylosuccinate synthetase, found in Yersinia pseudotuberculosis serotype O:1b (strain IP 31758).